Consider the following 202-residue polypeptide: Energy-coupling factor transporter transmembrane protein BioN (202 aa).

3 consecutive transmembrane segments (helical) span residues 21–40 (LLSLTAFAILLFISHNLLLL), 44–63 (VLVAAVLYGTVGLPIGEALL), and 68–90 (IFLTIAVVALFNLIFNPWQAALV).

This sequence belongs to the CbiQ family. As to quaternary structure, part of a biotin transporter complex composed of BioM, BioN and BioY.

It localises to the cell inner membrane. Functionally, involved in biotin uptake. This is Energy-coupling factor transporter transmembrane protein BioN (bioN) from Rhizobium etli (strain ATCC 51251 / DSM 11541 / JCM 21823 / NBRC 15573 / CFN 42).